A 1237-amino-acid polypeptide reads, in one-letter code: Zinc finger protein 687 (1237 aa).

2 disordered regions span residues 1-80 (MGDM…PDIS) and 96-330 (EALA…PLKV). A compositionally biased stretch (low complexity) spans 97-111 (ALAGGSAGDGAQAAG). Phosphoserine occurs at positions 102, 129, and 140. Over residues 132–144 (PSLPGTPHSPAPP) the composition is skewed to pro residues. Thr148 carries the phosphothreonine modification. Ser227, Ser242, Ser251, Ser253, Ser266, and Ser271 each carry phosphoserine. Positions 234-244 (LAQQGSGSSPK) are enriched in polar residues. A Glycyl lysine isopeptide (Lys-Gly) (interchain with G-Cter in SUMO2) cross-link involves residue Lys285. Over residues 297 to 310 (SSPGSPQSPSSGAE) the composition is skewed to low complexity. Residues Lys336 and Lys372 each participate in a glycyl lysine isopeptide (Lys-Gly) (interchain with G-Cter in SUMO2) cross-link. Ser374 carries the post-translational modification Phosphoserine. Position 377 is a phosphothreonine (Thr377). Glycyl lysine isopeptide (Lys-Gly) (interchain with G-Cter in SUMO2) cross-links involve residues Lys384, Lys397, and Lys422. Ser433 is subject to Phosphoserine. Residues Lys435, Lys439, Lys451, and Lys464 each participate in a glycyl lysine isopeptide (Lys-Gly) (interchain with G-Cter in SUMO2) cross-link. Ser495 is subject to Phosphoserine. The segment at 533 to 552 (YRCLECGDAFSLEKSLARHY) adopts a C2H2-type 1; degenerate zinc-finger fold. 5 consecutive C2H2-type zinc fingers follow at residues 705-727 (NVCP…QRMH), 764-787 (YRCP…QTSH), 792-815 (HKCP…YSQH), 827-849 (YKCA…FDQH), and 858-881 (FKCP…KNTH). Residues 880-890 (THQSGRLEETA) are compositionally biased toward basic and acidic residues. The tract at residues 880-957 (THQSGRLEET…LGSKGLKGGG (78 aa)) is disordered. Thr900 carries the post-translational modification Phosphothreonine. Residues 915 to 925 (AAPATEESSSS) show a composition bias toward low complexity. Lys954 participates in a covalent cross-link: Glycyl lysine isopeptide (Lys-Gly) (interchain with G-Cter in SUMO2). 2 C2H2-type zinc fingers span residues 963–986 (WTCG…KKEH) and 993–1016 (FPCR…RVNH). A Glycyl lysine isopeptide (Lys-Gly) (interchain with G-Cter in SUMO2) cross-link involves residue Lys1043. The disordered stretch occupies residues 1051–1121 (LQLGAQSPGR…LRYRSSSSTE (71 aa)). The residue at position 1057 (Ser1057) is a Phosphoserine. An Omega-N-methylarginine modification is found at Arg1060. 3 positions are modified to phosphoserine: Ser1082, Ser1083, and Ser1085. Arg1101 is modified (omega-N-methylarginine). Residues Ser1106 and Ser1118 each carry the phosphoserine modification. Residues 1135–1158 (QQCLDCGLCFASPGSLSRHRFISH) form a C2H2-type 9 zinc finger. Residues 1159-1195 (KKRRGVGKASALGLGDGEEEAPPSRSDPDGGDSPLPA) are disordered. Phosphoserine is present on residues Ser1184, Ser1191, and Ser1211. Residues 1200 to 1222 (LTCKVCGKSCDSPLNLKTHFRTH) form a C2H2-type 10 zinc finger.

It belongs to the krueppel C2H2-type zinc-finger protein family. As to quaternary structure, interacts with ZMYND8. As to expression, widely expressed with highest levels in obvary, muscle, blood and lung.

Its subcellular location is the cytoplasm. The protein resides in the nucleus. Functionally, may be involved in transcriptional regulation. The chain is Zinc finger protein 687 (ZNF687) from Homo sapiens (Human).